The chain runs to 791 residues: Primase D5 (791 aa).

Aspartate 174 is an active-site residue. A primase region spans residues 346-471 (SDRGEYLVWL…ELMSILDDIQ (126 aa)). The SF3 helicase domain maps to 479–641 (ENRELYEQIL…FTNTKKKVHN (163 aa)). Residue 505-512 (GETATGKS) coordinates ATP.

This sequence belongs to the poxviridae D5 family. Interacts with A20.

In terms of biological role, primase which may have roles in initiation of DNA replication or lagging-strand synthesis. The chain is Primase D5 from Fowlpox virus (strain NVSL) (FPV).